Reading from the N-terminus, the 154-residue chain is Myoglobin (154 aa).

One can recognise a Globin domain in the interval 2–148; that stretch reads GLSDGEWQLV…FRNDIAAKYK (147 aa). Ser-4 is subject to Phosphoserine. His-65 contributes to the nitrite binding site. An O2-binding site is contributed by His-65. Thr-68 bears the Phosphothreonine mark. His-94 serves as a coordination point for heme b.

The protein belongs to the globin family. As to quaternary structure, monomeric.

The protein localises to the cytoplasm. The protein resides in the sarcoplasm. It carries out the reaction Fe(III)-heme b-[protein] + nitric oxide + H2O = Fe(II)-heme b-[protein] + nitrite + 2 H(+). The catalysed reaction is H2O2 + AH2 = A + 2 H2O. Functionally, monomeric heme protein which primary function is to store oxygen and facilitate its diffusion within muscle tissues. Reversibly binds oxygen through a pentacoordinated heme iron and enables its timely and efficient release as needed during periods of heightened demand. Depending on the oxidative conditions of tissues and cells, and in addition to its ability to bind oxygen, it also has a nitrite reductase activity whereby it regulates the production of bioactive nitric oxide. Under stress conditions, like hypoxia and anoxia, it also protects cells against reactive oxygen species thanks to its pseudoperoxidase activity. In Lepilemur mustelinus (Weasel sportive lemur), this protein is Myoglobin (MB).